The sequence spans 248 residues: ATP synthase subunit a, chloroplastic (248 aa).

The next 5 helical transmembrane spans lie at 38 to 58 (QVLI…AIAV), 96 to 116 (VPFI…GALL), 135 to 155 (INTT…AGLT), 200 to 220 (LVVV…VMFL), and 221 to 241 (GLFT…AYIG).

This sequence belongs to the ATPase A chain family. In terms of assembly, F-type ATPases have 2 components, CF(1) - the catalytic core - and CF(0) - the membrane proton channel. CF(1) has five subunits: alpha(3), beta(3), gamma(1), delta(1), epsilon(1). CF(0) has four main subunits: a, b, b' and c.

The protein localises to the plastid. The protein resides in the chloroplast thylakoid membrane. Its function is as follows. Key component of the proton channel; it plays a direct role in the translocation of protons across the membrane. The polypeptide is ATP synthase subunit a, chloroplastic (Nymphaea alba (White water-lily)).